The primary structure comprises 595 residues: Sorting nexin-9 (595 aa).

An SH3 domain is found at 1-62 (MATKARVMYD…PTDYVEILPN (62 aa)). Residues 89–100 (QTNSSSANSNNQ) are compositionally biased toward low complexity. A disordered region spans residues 89 to 199 (QTNSSSANSN…QRGNSRAGAS (111 aa)). Ser121 is modified (phosphoserine). Positions 129–144 (TDGTSAQRNSSANNWD) are enriched in polar residues. Over residues 159–169 (GDDDEWDEDWD) the composition is skewed to acidic residues. Ser200 bears the Phosphoserine mark. Positions 201 to 213 (MKLPLNKFPGFAK) are critical for tubulation activity. Tyr239 bears the Phosphotyrosine mark. A PX domain is found at 250 to 360 (FDCVVADPRK…QQFLNFRDEK (111 aa)). A 1,2-diacyl-sn-glycero-3-phospho-(1D-myo-inositol-4,5-bisphosphate) is bound by residues Arg286, Lys288, and Arg327. At Lys288 the chain carries N6-acetyllysine. The region spanning 392 to 595 (LIEIEQKCDA…RQALSRFPVM (204 aa)) is the BAR domain.

It belongs to the sorting nexin family. As to quaternary structure, homodimer, and homooligomer. Heterodimer with SNX18. Interacts with ITCH. Interacts (via SH3 domain) with TNK2, WASL and ACTR3. Identified in a complex with TNK2 and clathrin heavy chains. Identified in a complex with the AP-2 complex, clathrin and DNM2. Interacts (via SH3 domain) with DNM1 and DNM2. Identified in an oligomeric complex containing DNM1 and SNX9. Interacts with FCHSD1. Interacts with ADAM9 and ADAM15 cytoplasmic tails. In terms of processing, phosphorylated on tyrosine residues by TNK2. Phosphorylation promotes its activity in the degradation of EGFR. Post-translationally, ubiquitinated by ITCH. In terms of tissue distribution, detected in inner ear vestibula and in the cuticular plate of cochlear hair cells (at protein level).

It localises to the cytoplasmic vesicle membrane. The protein resides in the cell membrane. The protein localises to the cytoplasmic vesicle. It is found in the clathrin-coated vesicle. Its subcellular location is the golgi apparatus. It localises to the trans-Golgi network. The protein resides in the cell projection. The protein localises to the ruffle. It is found in the cytoplasm. Its function is as follows. Involved in endocytosis and intracellular vesicle trafficking, both during interphase and at the end of mitosis. Required for efficient progress through mitosis and cytokinesis. Required for normal formation of the cleavage furrow at the end of mitosis. Plays a role in endocytosis via clathrin-coated pits, but also clathrin-independent, actin-dependent fluid-phase endocytosis. Plays a role in macropinocytosis. Promotes internalization of TNFR. Promotes degradation of EGFR after EGF signaling. Stimulates the GTPase activity of DNM1. Promotes DNM1 oligomerization. Promotes activation of the Arp2/3 complex by WASL, and thereby plays a role in the reorganization of the F-actin cytoskeleton. Binds to membranes enriched in phosphatidylinositol 4,5-bisphosphate and promotes membrane tubulation. Has lower affinity for membranes enriched in phosphatidylinositol 3-phosphate. The polypeptide is Sorting nexin-9 (Snx9) (Mus musculus (Mouse)).